The primary structure comprises 1102 residues: Phosphatidylinositol 4,5-bisphosphate 3-kinase catalytic subunit gamma isoform (1102 aa).

The 108-residue stretch at 34–141 (SMELIPIEFV…PGQIHLVQRH (108 aa)) folds into the PI3K-ABD domain. One can recognise a PI3K-RBD domain in the interval 217–309 (NNCIFIVIHR…GEEIHVVLDT (93 aa)). A C2 PI3K-type domain is found at 357-521 (CDRKFRVKIR…NSMSISILLD (165 aa)). The PIK helical domain occupies 541–723 (DRVRAEMPNQ…AVILEAYLRG (183 aa)). Residues 797-1080 (AIEKCKVMAS…QIEVCRDKGW (284 aa)) enclose the PI3K/PI4K catalytic domain. The interval 803–809 (VMASKKK) is G-loop. ATP is bound by residues 829–838 (GIIFKHGDDL) and 864–872 (LLPYGCIST). Residues 943 to 951 (GIGDRHNDN) are catalytic loop. 961–969 (FHIDFGHIL) contributes to the ATP binding site. An activation loop region spans residues 962–988 (HIDFGHILGNYKSFLGINKERVPFVLT). Threonine 1024 bears the Phosphothreonine; by PKA mark. Serine 1101 is modified (phosphoserine; by autocatalysis).

It belongs to the PI3/PI4-kinase family. In terms of assembly, heterodimer of a catalytic subunit PIK3CG and a PIK3R5 or PIK3R6 regulatory subunit. Interacts with GRK2 through the PIK helical domain. Interaction with GRK2 is required for targeting to agonist-occupied receptor. Interacts with PDE3B; regulates PDE3B activity and thereby cAMP levels in cells. Interacts with TPM2. Interacts with EPHA8; regulates integrin-mediated cell adhesion to substrate. Interacts with HRAS; the interaction is required for membrane recruitment and beta-gamma G protein dimer-dependent activation of the PI3K gamma complex PIK3CG:PIK3R6. Autophosphorylation at Ser-1101 has no effect on the phosphatidylinositol-4,5-bisphosphate 3-kinase activity. As to expression, pancreas, skeletal muscle, liver and heart.

Its subcellular location is the cytoplasm. It localises to the cell membrane. The catalysed reaction is a 1,2-diacyl-sn-glycero-3-phospho-(1D-myo-inositol) + ATP = a 1,2-diacyl-sn-glycero-3-phospho-(1D-myo-inositol-3-phosphate) + ADP + H(+). The enzyme catalyses a 1,2-diacyl-sn-glycero-3-phospho-(1D-myo-inositol-4,5-bisphosphate) + ATP = a 1,2-diacyl-sn-glycero-3-phospho-(1D-myo-inositol-3,4,5-trisphosphate) + ADP + H(+). It catalyses the reaction a 1,2-diacyl-sn-glycero-3-phospho-(1D-myo-inositol 4-phosphate) + ATP = a 1,2-diacyl-sn-glycero-3-phospho-(1D-myo-inositol-3,4-bisphosphate) + ADP + H(+). It carries out the reaction L-seryl-[protein] + ATP = O-phospho-L-seryl-[protein] + ADP + H(+). The protein operates within phospholipid metabolism; phosphatidylinositol phosphate biosynthesis. With respect to regulation, activated by both the alpha and the beta-gamma G proteins following stimulation of G protein-coupled receptors (GPCRs). Activation by GPCRs is assisted by the regulatory subunits (PIK3R5 or PIK3R6) leading to the translocation from the cytosol to the plasma membrane and to kinase activation. Inhibited by AS-604850 and AS-605240. Functionally, phosphoinositide-3-kinase (PI3K) that phosphorylates PtdIns(4,5)P2 (Phosphatidylinositol 4,5-bisphosphate) to generate phosphatidylinositol 3,4,5-trisphosphate (PIP3). PIP3 plays a key role by recruiting PH domain-containing proteins to the membrane, including AKT1 and PDPK1, activating signaling cascades involved in cell growth, survival, proliferation, motility and morphology. Links G-protein coupled receptor activation to PIP3 production. Involved in immune, inflammatory and allergic responses. Modulates leukocyte chemotaxis to inflammatory sites and in response to chemoattractant agents. May control leukocyte polarization and migration by regulating the spatial accumulation of PIP3 and by regulating the organization of F-actin formation and integrin-based adhesion at the leading edge. Controls motility of dendritic cells. Together with PIK3CD is involved in natural killer (NK) cell development and migration towards the sites of inflammation. Participates in T-lymphocyte migration. Regulates T-lymphocyte proliferation, activation, and cytokine production. Together with PIK3CD participates in T-lymphocyte development. Required for B-lymphocyte development and signaling. Together with PIK3CD participates in neutrophil respiratory burst. Together with PIK3CD is involved in neutrophil chemotaxis and extravasation. Together with PIK3CB promotes platelet aggregation and thrombosis. Regulates alpha-IIb/beta-3 integrins (ITGA2B/ ITGB3) adhesive function in platelets downstream of P2Y12 through a lipid kinase activity-independent mechanism. May have also a lipid kinase activity-dependent function in platelet aggregation. Involved in endothelial progenitor cell migration. Negative regulator of cardiac contractility. Modulates cardiac contractility by anchoring protein kinase A (PKA) and PDE3B activation, reducing cAMP levels. Regulates cardiac contractility also by promoting beta-adrenergic receptor internalization by binding to GRK2 and by non-muscle tropomyosin phosphorylation. Also has serine/threonine protein kinase activity: both lipid and protein kinase activities are required for beta-adrenergic receptor endocytosis. May also have a scaffolding role in modulating cardiac contractility. Contributes to cardiac hypertrophy under pathological stress. Through simultaneous binding of PDE3B to RAPGEF3 and PIK3R6 is assembled in a signaling complex in which the PI3K gamma complex is activated by RAPGEF3 and which is involved in angiogenesis. In neutrophils, participates in a phospholipase C-activating N-formyl peptide-activated GPCR (G protein-coupled receptor) signaling pathway downstream of RASGRP4-mediated Ras-activation, to promote neutrophil functional responses. The polypeptide is Phosphatidylinositol 4,5-bisphosphate 3-kinase catalytic subunit gamma isoform (PIK3CG) (Homo sapiens (Human)).